Consider the following 262-residue polypeptide: Adenosylcobinamide-GDP ribazoletransferase (262 aa).

Helical transmembrane passes span 43–63 (YFGL…WLTQ), 66–86 (LPAG…TGGF), 120–140 (GALA…ELAL), 146–166 (AGSA…SIIF), 191–211 (LLIL…LAAL), and 242–262 (AAQQ…GNIL).

This sequence belongs to the CobS family. Requires Mg(2+) as cofactor.

It localises to the cell inner membrane. It carries out the reaction alpha-ribazole + adenosylcob(III)inamide-GDP = adenosylcob(III)alamin + GMP + H(+). It catalyses the reaction alpha-ribazole 5'-phosphate + adenosylcob(III)inamide-GDP = adenosylcob(III)alamin 5'-phosphate + GMP + H(+). Its pathway is cofactor biosynthesis; adenosylcobalamin biosynthesis; adenosylcobalamin from cob(II)yrinate a,c-diamide: step 7/7. Its function is as follows. Joins adenosylcobinamide-GDP and alpha-ribazole to generate adenosylcobalamin (Ado-cobalamin). Also synthesizes adenosylcobalamin 5'-phosphate from adenosylcobinamide-GDP and alpha-ribazole 5'-phosphate. The polypeptide is Adenosylcobinamide-GDP ribazoletransferase (Shewanella baltica (strain OS195)).